The chain runs to 197 residues: Small ribosomal subunit protein uS10c (197 aa).

A chloroplast-targeting transit peptide spans methionine 1–phenylalanine 60. Positions glutamate 67–aspartate 91 are disordered.

It belongs to the universal ribosomal protein uS10 family. In terms of assembly, part of the 30S ribosomal subunit.

Its subcellular location is the plastid. The protein resides in the chloroplast. The chain is Small ribosomal subunit protein uS10c (RPS10) from Mesembryanthemum crystallinum (Common ice plant).